The following is a 488-amino-acid chain: MIPVVALVGRPNVGKSTLFNRLTRTRDALVADFPGLTRDRKYGRAFLSGYEFIVVDTGGIDGTEEGIETKMAEQSLAAIEEADVVLFMTDARAGLTAADLSIAQHLRSREKTTFVVANKVDGIDADSACAEFWSLGLGEVYQMAASQGRGVTNMIEYALTPYAEAMGIVRQGEDEVTEEREYTEEEAEAEQKRLQDLPIKLAIIGKPNVGKSTLTNRILGEERVVVFDEPGTTRDSIYIPMEREGREYVIIDTAGVRRRSKVHQVIEKFSVIKTLKAVEDANVVLLIIDAREGIAEQDLGLLGFALNAGRALVIAVNKWDGIDQGIKDRVKSELDRRLGFIDFARIHFISALHGTGVGHLFESIEEAYDSATRRVSTSMLTRIMQMSQDDHQPPLVNGRRVKLKYAHAGGYNPPIVVIHGNQVSRLPDSYKRYMMNYFRRSLKVVGTPIQLRFQEGDNPFENKTEKLTMSQERRRKRAQSHIKDRKTK.

2 consecutive EngA-type G domains span residues 3–166 (PVVA…AEAM) and 199–372 (IKLA…DSAT). Residues 9-16 (GRPNVGKS), 56-60 (DTGGI), 118-121 (NKVD), 205-212 (GKPNVGKS), 252-256 (DTAGV), and 317-320 (NKWD) each bind GTP. A KH-like domain is found at 373–457 (RRVSTSMLTR…PIQLRFQEGD (85 aa)). Residues 460 to 488 (FENKTEKLTMSQERRRKRAQSHIKDRKTK) form a disordered region. A compositionally biased stretch (basic residues) spans 473–488 (RRRKRAQSHIKDRKTK).

This sequence belongs to the TRAFAC class TrmE-Era-EngA-EngB-Septin-like GTPase superfamily. EngA (Der) GTPase family. As to quaternary structure, associates with the 50S ribosomal subunit.

GTPase that plays an essential role in the late steps of ribosome biogenesis. This Shewanella baltica (strain OS223) protein is GTPase Der.